A 291-amino-acid polypeptide reads, in one-letter code: Verruculogen synthase (291 aa).

It belongs to the PhyH family. In terms of assembly, homodimer. The cofactor is Fe cation.

The catalysed reaction is fumitremorgin B + 2-oxoglutarate + AH2 + 2 O2 = verruculogen + succinate + A + CO2 + H2O. It participates in mycotoxin biosynthesis. Verruculogen synthase; part of the gene cluster that mediates the biosynthesis of fumitremorgins, indole alkaloids that carry not only intriguing chemical structures, but also interesting biological and pharmacological activities. The biosynthesis of fumitremorgin-type alkaloids begins by condensation of the two amino acids L-tryptophan and L-proline to brevianamide F, catalyzed by the non-ribosomal peptide synthetase ftmPS/ftmA. Brevianamide F is then prenylated by the prenyltransferase ftmPT1/ftmB in the presence of dimethylallyl diphosphate, resulting in the formation of tryprostatin B. The three cytochrome P450 monooxygenases, ftmP450-1/ftmC, ftmP450-2/ftmE and ftmP450-3/FtmG, are responsible for the conversion of tryprostatin B to 6-hydroxytryprostatin B, tryprostatin A to fumitremorgin C and fumitremorgin C to 12,13-dihydroxyfumitremorgin C, respectively. The putative methyltransferase ftmMT/ftmD is expected for the conversion of 6-hydroxytryprostatin B to tryprostatin A. FtmPT2/FtmH catalyzes the prenylation of 12,13-dihydroxyfumitre-morgin C in the presence of dimethylallyl diphosphate, resulting in the formation of fumitremorgin B. Fumitremorgin B is further converted to verruculogen by ftmOx1/ftmF via the insertion of an endoperoxide bond between the two prenyl moieties. Finally, verruculogen is further converted to fumitremorgin A by the verruculogen prenyltransferase ftmPT3. The sequence is that of Verruculogen synthase from Neosartorya fischeri (strain ATCC 1020 / DSM 3700 / CBS 544.65 / FGSC A1164 / JCM 1740 / NRRL 181 / WB 181) (Aspergillus fischerianus).